We begin with the raw amino-acid sequence, 176 residues long: Peptide methionine sulfoxide reductase MsrA (176 aa).

C12 is a catalytic residue.

It belongs to the MsrA Met sulfoxide reductase family.

It carries out the reaction L-methionyl-[protein] + [thioredoxin]-disulfide + H2O = L-methionyl-(S)-S-oxide-[protein] + [thioredoxin]-dithiol. The catalysed reaction is [thioredoxin]-disulfide + L-methionine + H2O = L-methionine (S)-S-oxide + [thioredoxin]-dithiol. Has an important function as a repair enzyme for proteins that have been inactivated by oxidation. Catalyzes the reversible oxidation-reduction of methionine sulfoxide in proteins to methionine. This is Peptide methionine sulfoxide reductase MsrA from Thermus thermophilus (strain ATCC 27634 / DSM 579 / HB8).